The chain runs to 234 residues: Large ribosomal subunit protein uL1 (234 aa).

Belongs to the universal ribosomal protein uL1 family. Part of the 50S ribosomal subunit.

Binds directly to 23S rRNA. The L1 stalk is quite mobile in the ribosome, and is involved in E site tRNA release. In terms of biological role, protein L1 is also a translational repressor protein, it controls the translation of the L11 operon by binding to its mRNA. The sequence is that of Large ribosomal subunit protein uL1 from Geobacter metallireducens (strain ATCC 53774 / DSM 7210 / GS-15).